We begin with the raw amino-acid sequence, 178 residues long: ATP synthase subunit delta (178 aa).

It belongs to the ATPase delta chain family. As to quaternary structure, F-type ATPases have 2 components, F(1) - the catalytic core - and F(0) - the membrane proton channel. F(1) has five subunits: alpha(3), beta(3), gamma(1), delta(1), epsilon(1). F(0) has three main subunits: a(1), b(2) and c(10-14). The alpha and beta chains form an alternating ring which encloses part of the gamma chain. F(1) is attached to F(0) by a central stalk formed by the gamma and epsilon chains, while a peripheral stalk is formed by the delta and b chains.

The protein resides in the cell inner membrane. Functionally, f(1)F(0) ATP synthase produces ATP from ADP in the presence of a proton or sodium gradient. F-type ATPases consist of two structural domains, F(1) containing the extramembraneous catalytic core and F(0) containing the membrane proton channel, linked together by a central stalk and a peripheral stalk. During catalysis, ATP synthesis in the catalytic domain of F(1) is coupled via a rotary mechanism of the central stalk subunits to proton translocation. In terms of biological role, this protein is part of the stalk that links CF(0) to CF(1). It either transmits conformational changes from CF(0) to CF(1) or is implicated in proton conduction. This chain is ATP synthase subunit delta, found in Chromohalobacter salexigens (strain ATCC BAA-138 / DSM 3043 / CIP 106854 / NCIMB 13768 / 1H11).